The chain runs to 1312 residues: Kinesin-like protein KIF16B (1312 aa).

Residues 3 to 358 (SVKVAVRVRP…LRYANRAKNI (356 aa)) enclose the Kinesin motor domain. 102–109 (GQTGSGKS) is an ATP binding site. The stretch at 366-425 (EDANVKLIRELRAEIARLKTLLAQGNQIALLDSPTALSMEEKLHQNEARVQELTKEWTNK) forms a coiled coil. Serine 398 bears the Phosphoserine mark. The region spanning 480-544 (VGREDASTEQ…LNQGAVILLG (65 aa)) is the FHA domain. Threonine 577 bears the Phosphothreonine mark. A phosphoserine mark is found at serine 582, serine 838, serine 1047, and serine 1145. 2 coiled-coil regions span residues 835–913 (KLAS…LQNH) and 941–1073 (QVEK…KQKI). The 115-residue stretch at 1177–1291 (DPIKISIPRY…KVGLTLSKHT (115 aa)) folds into the PX domain.

This sequence belongs to the TRAFAC class myosin-kinesin ATPase superfamily. Kinesin family. In terms of assembly, interacts with PTPN21. Interacts with RAB14.

The protein resides in the cytoplasm. The protein localises to the cytoskeleton. It localises to the early endosome membrane. It is found in the spindle. In terms of biological role, plus end-directed microtubule-dependent motor protein involved in endosome transport and receptor recycling and degradation. Regulates the plus end motility of early endosomes and the balance between recycling and degradation of receptors such as EGF receptor (EGFR) and FGF receptor (FGFR). Regulates the Golgi to endosome transport of FGFR-containing vesicles during early development, a key process for developing basement membrane and epiblast and primitive endoderm lineages during early postimplantation development. The sequence is that of Kinesin-like protein KIF16B (Kif16b) from Mus musculus (Mouse).